A 1085-amino-acid polypeptide reads, in one-letter code: Error-prone DNA polymerase (1085 aa).

Belongs to the DNA polymerase type-C family. DnaE2 subfamily.

It is found in the cytoplasm. It catalyses the reaction DNA(n) + a 2'-deoxyribonucleoside 5'-triphosphate = DNA(n+1) + diphosphate. Its function is as follows. DNA polymerase involved in damage-induced mutagenesis and translesion synthesis (TLS). It is not the major replicative DNA polymerase. In Symbiobacterium thermophilum (strain DSM 24528 / JCM 14929 / IAM 14863 / T), this protein is Error-prone DNA polymerase.